The primary structure comprises 223 residues: Transcriptional regulatory protein PhoP (223 aa).

The 115-residue stretch at 2-116 folds into the Response regulatory domain; the sequence is RVLVVEDNAL…EVMARMQALM (115 aa). A 4-aspartylphosphate modification is found at Asp51. Positions 124–222 form a DNA-binding region, ompR/PhoB-type; sequence SQVISLPPFQ…VRGQGYLFEL (99 aa).

Monomer in the inactive, unphosphorylated state and dimer in the active, phosphorylated state. Phosphorylated by PhoQ.

Its subcellular location is the cytoplasm. Its activity is regulated as follows. Feedback inhibited by MgrB, which seems to bind PhoQ, altering its activity and that of downstream effector PhoP. PhoP-regulated transcription is redox-sensitive, being activated when the periplasm becomes more reducing (deletion of dsbA/dsbB, or treatment with dithiothreitol). MgrB acts between DsbA/DsbB and PhoP/PhoQ in this pathway. In terms of biological role, member of the two-component regulatory system PhoP/PhoQ involved in adaptation to low Mg(2+) environments and the control of acid resistance genes. In low periplasmic Mg(2+), PhoQ phosphorylates PhoP, resulting in the expression of PhoP-activated genes (PAG) and repression of PhoP-repressed genes (PRG). In high periplasmic Mg(2+), PhoQ dephosphorylates phospho-PhoP, resulting in the repression of PAG and may lead to expression of some PRG. Mediates magnesium influx to the cytosol by activation of MgtA. Promotes expression of the two-component regulatory system rstA/rstB and transcription of the hemL, mgrB, nagA, slyB, vboR and yrbL genes. This chain is Transcriptional regulatory protein PhoP (phoP), found in Escherichia coli (strain K12).